The sequence spans 386 residues: TGF-beta-activated kinase 1 and MAP3K7-binding protein 1 (386 aa).

Residues 22 to 327 (HSCRYSKQKN…EEMTVIYVKL (306 aa)) form the PPM-type phosphatase domain.

Interacts with mom-4; the interaction enhances mom-4 kinase activity.

Its function is as follows. Involved in the Wnt signaling pathway by regulating mom-4 kinase activity. The protein is TGF-beta-activated kinase 1 and MAP3K7-binding protein 1 of Caenorhabditis elegans.